A 223-amino-acid chain; its full sequence is Ribonuclease T (223 aa).

In terms of domain architecture, Exonuclease spans 20–194; it reads VVIDVETAGF…YDTERTAELF (175 aa). Residues Asp23, Glu25, His181, and Asp186 each contribute to the Mg(2+) site. The Proton donor/acceptor role is filled by His181.

This sequence belongs to the RNase T family. In terms of assembly, homodimer. The cofactor is Mg(2+).

In terms of biological role, trims short 3' overhangs of a variety of RNA species, leaving a one or two nucleotide 3' overhang. Responsible for the end-turnover of tRNA: specifically removes the terminal AMP residue from uncharged tRNA (tRNA-C-C-A). Also appears to be involved in tRNA biosynthesis. The chain is Ribonuclease T from Shewanella baltica (strain OS155 / ATCC BAA-1091).